We begin with the raw amino-acid sequence, 163 residues long: Type VII secretion system protein EsaG (163 aa).

In terms of assembly, interacts with EssD (via C-terminus). Interacts with EssE.

The protein resides in the cytoplasm. Functionally, component of the type VII secretion system (Ess). Also acts as part of toxin-antitoxin system. Counteracts the toxic effect of EssD via direct interaction. In Staphylococcus aureus (strain NCTC 8325 / PS 47), this protein is Type VII secretion system protein EsaG.